The chain runs to 69 residues: DNA gyrase inhibitor YacG (69 aa).

4 residues coordinate Zn(2+): Cys-13, Cys-16, Cys-32, and Cys-36.

Belongs to the DNA gyrase inhibitor YacG family. As to quaternary structure, interacts with GyrB. Zn(2+) is required as a cofactor.

Functionally, inhibits all the catalytic activities of DNA gyrase by preventing its interaction with DNA. Acts by binding directly to the C-terminal domain of GyrB, which probably disrupts DNA binding by the gyrase. This Neisseria meningitidis serogroup A / serotype 4A (strain DSM 15465 / Z2491) protein is DNA gyrase inhibitor YacG.